Consider the following 493-residue polypeptide: Uridine 5'-monophosphate synthase (493 aa).

The OPRTase stretch occupies residues 1–207 (MVAQNSDKMR…VAKYIAAVQI (207 aa)). The tract at residues 208-233 (NSDGTFVGGDKGDVVRANDLQRTKLT) is domain linker. Residues 234 to 493 (YENRANLAKS…WAAYQDRVAK (260 aa)) are OMPdecase. The active site involves K320.

In the N-terminal section; belongs to the purine/pyrimidine phosphoribosyltransferase family. It in the C-terminal section; belongs to the OMP decarboxylase family.

The catalysed reaction is orotidine 5'-phosphate + diphosphate = orotate + 5-phospho-alpha-D-ribose 1-diphosphate. It catalyses the reaction orotidine 5'-phosphate + H(+) = UMP + CO2. It participates in pyrimidine metabolism; UMP biosynthesis via de novo pathway; UMP from orotate: step 1/2. It functions in the pathway pyrimidine metabolism; UMP biosynthesis via de novo pathway; UMP from orotate: step 2/2. The sequence is that of Uridine 5'-monophosphate synthase (r-l) from Drosophila melanogaster (Fruit fly).